The sequence spans 596 residues: Chaperone protein DnaK (596 aa).

At T180 the chain carries Phosphothreonine; by autocatalysis.

Belongs to the heat shock protein 70 family.

Acts as a chaperone. The protein is Chaperone protein DnaK of Thermotoga neapolitana (strain ATCC 49049 / DSM 4359 / NBRC 107923 / NS-E).